The chain runs to 156 residues: uncharacterized protein (156 aa).

This is an uncharacterized protein from Invertebrate iridescent virus 3 (IIV-3).